The primary structure comprises 934 residues: Serine/threonine-protein kinase atg1 (934 aa).

The 307-residue stretch at 22–328 (YTRLDEIGRG…SDFFDCDTIT (307 aa)) folds into the Protein kinase domain. ATP contacts are provided by residues 28-36 (IGRGSFATV) and Lys-51. Asp-165 serves as the catalytic Proton acceptor. Disordered stretches follow at residues 335-432 (IADD…PRRP), 462-481 (RNTY…TKEE), 531-580 (RRPG…YGQS), 684-703 (TDPS…TDLT), 800-822 (RLPP…GSGA), and 878-900 (EEEE…RRDG). Residues 340-368 (PSTSRRSSVAVNTSGSTSRPQSRTGSRTP) show a composition bias toward polar residues. Residues 371–386 (MKREKDASYPGKKDDQ) are compositionally biased toward basic and acidic residues. A compositionally biased stretch (low complexity) spans 538 to 550 (SSTATATSPLATT). Basic and acidic residues predominate over residues 561-577 (ARADSTHTRQGSYERRY).

It belongs to the protein kinase superfamily. Ser/Thr protein kinase family. APG1/unc-51/ULK1 subfamily. Homodimer. Forms a ternary complex with ATG13 and ATG17.

It localises to the cytoplasm. The protein resides in the preautophagosomal structure membrane. It carries out the reaction L-seryl-[protein] + ATP = O-phospho-L-seryl-[protein] + ADP + H(+). The enzyme catalyses L-threonyl-[protein] + ATP = O-phospho-L-threonyl-[protein] + ADP + H(+). Functionally, serine/threonine protein kinase involved in the cytoplasm to vacuole transport (Cvt) and found to be essential in autophagy, where it is required for the formation of autophagosomes. Involved in the clearance of protein aggregates which cannot be efficiently cleared by the proteasome. Required for selective autophagic degradation of the nucleus (nucleophagy) as well as for mitophagy which contributes to regulate mitochondrial quantity and quality by eliminating the mitochondria to a basal level to fulfill cellular energy requirements and preventing excess ROS production. Also involved in endoplasmic reticulum-specific autophagic process, in selective removal of ER-associated degradation (ERAD) substrates. Plays a key role in ATG9 and ATG23 cycling through the pre-autophagosomal structure and is necessary to promote ATG18 binding to ATG9 through phosphorylation of ATG9. Catalyzes phosphorylation of ATG4, decreasing the interaction between ATG4 and ATG8 and impairing deconjugation of PE-conjugated forms of ATG8. Required for conidiation and development of aerial hyphae. The protein is Serine/threonine-protein kinase atg1 of Aspergillus oryzae (strain ATCC 42149 / RIB 40) (Yellow koji mold).